The chain runs to 261 residues: Small ribosomal subunit protein uS2 (261 aa).

S2 bears the N-acetylserine mark. Residues 214–261 (ATEDIKTDDVEEAPAADAETEWTGETEEVDWAESGATPAAEEAAASNW) are disordered. Over residues 222–244 (DVEEAPAADAETEWTGETEEVDW) the composition is skewed to acidic residues. Positions 245 to 261 (AESGATPAAEEAAASNW) are enriched in low complexity.

It belongs to the universal ribosomal protein uS2 family. Component of the small ribosomal subunit. Mature ribosomes consist of a small (40S) and a large (60S) subunit. The 40S subunit contains about 33 different proteins and 1 molecule of RNA (18S). The 60S subunit contains about 49 different proteins and 3 molecules of RNA (25S, 5.8S and 5S). Interacts with RPS21.

The protein resides in the cytoplasm. In terms of biological role, required for the assembly and/or stability of the 40S ribosomal subunit. Required for the processing of the 20S rRNA-precursor to mature 18S rRNA in a late step of the maturation of 40S ribosomal subunits. This is Small ribosomal subunit protein uS2 from Debaryomyces hansenii (strain ATCC 36239 / CBS 767 / BCRC 21394 / JCM 1990 / NBRC 0083 / IGC 2968) (Yeast).